An 831-amino-acid chain; its full sequence is Probable basic-leucine zipper transcription factor P (831 aa).

Disordered regions lie at residues 1–33 and 54–166; these read MNHR…PSII and NITS…IASR. Residues 54-85 show a composition bias toward low complexity; sequence NITSSPSTSSSPPISTTTTTTTTTTTTATAKK. Positions 87-96 are enriched in basic and acidic residues; that stretch reads NSKEKKKTTN. Over residues 97 to 129 the composition is skewed to low complexity; that stretch reads KDNNNNNNNNNSNNQQQQQQQQQQQQQQQQQQQ. Positions 101 to 141 form a coiled coil; the sequence is NNNNNNNSNNQQQQQQQQQQQQQQQQQQQYEEEDDDEEDEG. Over residues 130–143 the composition is skewed to acidic residues; the sequence is YEEEDDDEEDEGGD. The span at 144-154 shows a compositional bias: basic and acidic residues; it reads DNTKVGKGEKM. The bZIP domain maps to 151–214; it reads GEKMKARRTN…LELLKFSQEV (64 aa). The segment at 153 to 173 is basic motif; sequence KMKARRTNQNIASRNYRQRKK. The tract at residues 176–183 is leucine-zipper; the sequence is IKEMEDKI. Composition is skewed to low complexity over residues 469-484 and 497-510; these read SSSS…SSTS and SSSN…SASS. Disordered regions lie at residues 469–510, 658–697, 715–771, and 787–810; these read SSSS…SASS, QQQA…HQNY, DATN…NTNK, and SLFS…QNDS. Residues 601-664 are a coiled coil; that stretch reads AQQHAQQQAQ…QAAQQQAAQQ (64 aa). Low complexity-rich tracts occupy residues 674 to 695, 720 to 750, and 787 to 800; these read PPQH…QQHQ, NNNN…NNNN, and SLFS…NSQS.

The protein belongs to the bZIP family.

The protein localises to the nucleus. In terms of biological role, probable transcriptional regulator. The protein is Probable basic-leucine zipper transcription factor P (bzpP) of Dictyostelium discoideum (Social amoeba).